The chain runs to 416 residues: MDKLVIKGGVPLEGTIRVSGSKNASLPILMASILLDEPVIYRNVPRLRDIHTTNKLLGILGCPAEFQGDAVHVRPCDLNPEAPYELVKTMRASVLCLGPLLARLGEARVAYPGGCAIGARPVDLHLSALEKMGAEFELDSGYIVGRCRQLQGAHIRFDFPTVGGTENLLMAATLAKGETILENAAREPEVIDLADFLCACGADITGQGTDVIRIRGVERLHGCEYRIMPDRIEAGTFMVAAGITRGNLLIEDCPDDALDAVSQKLRDMGLHVSREEGGTRVRYQGHLESTDIVTHPYPGFPTDMQAQFMALMCVADGFGMVEETIFENRFMHVLELVRMGADVRLVGRTARVRGGRQLRGAPVMASDLRASASLVLAGLAAQGETHVQRIYHLDRGYESIEEKLCPVGADIRRVPE.

Phosphoenolpyruvate is bound at residue 22-23; that stretch reads KN. Arginine 91 is a UDP-N-acetyl-alpha-D-glucosamine binding site. Cysteine 115 (proton donor) is an active-site residue. At cysteine 115 the chain carries 2-(S-cysteinyl)pyruvic acid O-phosphothioketal. Residues 120 to 124, aspartate 303, and isoleucine 325 contribute to the UDP-N-acetyl-alpha-D-glucosamine site; that span reads RPVDL.

Belongs to the EPSP synthase family. MurA subfamily.

It localises to the cytoplasm. It carries out the reaction phosphoenolpyruvate + UDP-N-acetyl-alpha-D-glucosamine = UDP-N-acetyl-3-O-(1-carboxyvinyl)-alpha-D-glucosamine + phosphate. Its pathway is cell wall biogenesis; peptidoglycan biosynthesis. Cell wall formation. Adds enolpyruvyl to UDP-N-acetylglucosamine. The chain is UDP-N-acetylglucosamine 1-carboxyvinyltransferase from Oleidesulfovibrio alaskensis (strain ATCC BAA-1058 / DSM 17464 / G20) (Desulfovibrio alaskensis).